The sequence spans 156 residues: ATP synthase subunit b (156 aa).

A helical transmembrane segment spans residues 13-33; it reads AFIIFVWFCMKFVWPPLMNAI.

It belongs to the ATPase B chain family. F-type ATPases have 2 components, F(1) - the catalytic core - and F(0) - the membrane proton channel. F(1) has five subunits: alpha(3), beta(3), gamma(1), delta(1), epsilon(1). F(0) has three main subunits: a(1), b(2) and c(10-14). The alpha and beta chains form an alternating ring which encloses part of the gamma chain. F(1) is attached to F(0) by a central stalk formed by the gamma and epsilon chains, while a peripheral stalk is formed by the delta and b chains.

It is found in the cell inner membrane. F(1)F(0) ATP synthase produces ATP from ADP in the presence of a proton or sodium gradient. F-type ATPases consist of two structural domains, F(1) containing the extramembraneous catalytic core and F(0) containing the membrane proton channel, linked together by a central stalk and a peripheral stalk. During catalysis, ATP synthesis in the catalytic domain of F(1) is coupled via a rotary mechanism of the central stalk subunits to proton translocation. Functionally, component of the F(0) channel, it forms part of the peripheral stalk, linking F(1) to F(0). The chain is ATP synthase subunit b from Shewanella woodyi (strain ATCC 51908 / MS32).